Consider the following 328-residue polypeptide: uncharacterized protein (328 aa).

This is an uncharacterized protein from Schizosaccharomyces pombe (strain 972 / ATCC 24843) (Fission yeast).